Reading from the N-terminus, the 870-residue chain is NEDD4-like E3 ubiquitin-protein ligase WWP2 (870 aa).

The C2 domain maps to 1-117 (MASASSSRAG…KNNGGKMENM (117 aa)). Positions 151 to 299 (VPNGSALTDG…QQLPAAAQAP (149 aa)) are disordered. Polar residues-rich tracts occupy residues 152–171 (PNGSALTDGSQLPSRDSSGT) and 200–210 (SARTTPATGEQ). Residue S211 is modified to Phosphoserine. Polar residues-rich tracts occupy residues 222–243 (VKNSGHSGLANGTVNDEPTTAT) and 263–272 (VTPNPNTTSL). Over residues 290-299 (QQLPAAAQAP) the composition is skewed to low complexity. WW domains lie at 300–333 (DALPAGWEQRELPNGRVYYVDHNTKTTTWERPLP), 330–363 (RPLPPGWEKRTDPRGRFYYVDHNTRTTTWQRPTA), 405–437 (GPLPPGWEKRQDNGRVYYVNHNTRTTQWEDPRT), and 444–477 (PALPPGWEMKYTSEGVRYFVDHNTRTTTFKDPRP). The region spanning 536–870 (KPYDLRRRLY…IEETEGFGQE (335 aa)) is the HECT domain. Catalysis depends on C838, which acts as the Glycyl thioester intermediate.

In terms of assembly, interacts with POU5F1, RBP1, EGR2 and SLC11A2. Interacts with SCNN1A, SCNN1B, SCNN1G, WBP1, WBP2 and ATN1. Interacts with ERBB4, NDFIP1 and NDFIP2. Interacts with ARRDC4. Interacts (via WW domains) with ARRDC1 (via PPxY motifs); ubiquitinates ARRDC1. Interacts (via WW domains) with ARRDC2 and ARRDC3. As to quaternary structure, (Microbial infection) Interacts with adenovirus type 2 PIII. In terms of processing, autoubiquitinated. Ubiquitinated by the SCF(FBXL15) complex, leading to its degradation by the proteasome. Detected in heart, throughout the brain, placenta, lung, liver, muscle, kidney and pancreas. Also detected in spleen and peripheral blood leukocytes.

The protein localises to the nucleus. The catalysed reaction is S-ubiquitinyl-[E2 ubiquitin-conjugating enzyme]-L-cysteine + [acceptor protein]-L-lysine = [E2 ubiquitin-conjugating enzyme]-L-cysteine + N(6)-ubiquitinyl-[acceptor protein]-L-lysine.. Its pathway is protein modification; protein ubiquitination. Its activity is regulated as follows. Activated by NDFIP1- and NDFIP2-binding. E3 ubiquitin-protein ligase which accepts ubiquitin from an E2 ubiquitin-conjugating enzyme in the form of a thioester and then directly transfers the ubiquitin to targeted substrates. Polyubiquitinates POU5F1 by 'Lys-63'-linked conjugation and promotes it to proteasomal degradation; in embryonic stem cells (ESCs) the ubiquitination is proposed to regulate POU5F1 protein level. Ubiquitinates EGR2 and promotes it to proteasomal degradation; in T-cells the ubiquitination inhibits activation-induced cell death. Ubiquitinates SLC11A2; the ubiquitination is enhanced by presence of NDFIP1 and NDFIP2. Ubiquitinates RPB1 and promotes it to proteasomal degradation. In Homo sapiens (Human), this protein is NEDD4-like E3 ubiquitin-protein ligase WWP2 (WWP2).